The following is a 168-amino-acid chain: Endoribonuclease YbeY (168 aa).

Zn(2+) is bound by residues histidine 128, histidine 132, and histidine 138.

Belongs to the endoribonuclease YbeY family. Zn(2+) is required as a cofactor.

It is found in the cytoplasm. Functionally, single strand-specific metallo-endoribonuclease involved in late-stage 70S ribosome quality control and in maturation of the 3' terminus of the 16S rRNA. The sequence is that of Endoribonuclease YbeY from Sphingopyxis alaskensis (strain DSM 13593 / LMG 18877 / RB2256) (Sphingomonas alaskensis).